Reading from the N-terminus, the 749-residue chain is Phosphate-regulating neutral endopeptidase PHEX (749 aa).

Over 1–20 the chain is Cytoplasmic; that stretch reads MEAETGSSVETGKKANRGTR. A helical; Signal-anchor for type II membrane protein transmembrane segment spans residues 21-41; sequence IALVVFVGGTLVLGTILFLVS. The Extracellular portion of the chain corresponds to 42-641; that stretch reads QGLLSLQAKQ…LNVKGKRTLG (600 aa). The Peptidase M13 domain maps to 53–749; the sequence is YCLKPECIEA…NRGMDSCRLW (697 aa). C54 and C59 are oxidised to a cystine. N-linked (GlcNAc...) asparagine glycans are attached at residues N71, N238, N263, N290, N301, N377, and N484. Intrachain disulfides connect C77–C733, C85–C693, C142–C406, and C617–C746. H580 is a binding site for Zn(2+). Residue E581 is part of the active site. Positions 584 and 642 each coordinate Zn(2+). D646 functions as the Proton donor in the catalytic mechanism. A glycan (N-linked (GlcNAc...) asparagine) is linked at N736.

The protein belongs to the peptidase M13 family. In terms of assembly, interacts with MEPE; the interaction is zinc-dependent (via ASARM motif). Zn(2+) is required as a cofactor. In terms of tissue distribution, specifically expressed in ovary. Expressed at low levels in kidney.

It is found in the cell membrane. Peptidase that cleaves SIBLING (small integrin-binding ligand, N-linked glycoprotein)-derived ASARM peptides, thus regulating their biological activity. Cleaves ASARM peptides between Ser and Glu or Asp residues. Regulates osteogenic cell differentiation and bone mineralization through the cleavage of the MEPE-derived ASARM peptide. Promotes dentin mineralization and renal phosphate reabsorption by cleaving DMP1- and MEPE-derived ASARM peptides. Inhibits the cleavage of MEPE by CTSB/cathepsin B thus preventing MEPE degradation. This is Phosphate-regulating neutral endopeptidase PHEX (PHEX) from Homo sapiens (Human).